A 107-amino-acid chain; its full sequence is UPF0145 protein BT_3410 (107 aa).

The protein belongs to the UPF0145 family.

The protein is UPF0145 protein BT_3410 of Bacteroides thetaiotaomicron (strain ATCC 29148 / DSM 2079 / JCM 5827 / CCUG 10774 / NCTC 10582 / VPI-5482 / E50).